Here is a 91-residue protein sequence, read N- to C-terminus: Cell division protein FtsB (91 aa).

The Cytoplasmic segment spans residues 1 to 3 (MRW). Residues 4–21 (PLIVLAVLVIVLQYPLWL) form a helical membrane-spanning segment. Over 22–91 (GKGGWLRVWD…EIFVHTPRKP (70 aa)) the chain is Periplasmic. A coiled-coil region spans residues 28 to 74 (RVWDVDRQLQAQRETNQRLEQRNAGLEAEVRDLKSGNEAVEERARFE).

This sequence belongs to the FtsB family. In terms of assembly, part of a complex composed of FtsB, FtsL and FtsQ.

It localises to the cell inner membrane. In terms of biological role, essential cell division protein. May link together the upstream cell division proteins, which are predominantly cytoplasmic, with the downstream cell division proteins, which are predominantly periplasmic. This Aromatoleum aromaticum (strain DSM 19018 / LMG 30748 / EbN1) (Azoarcus sp. (strain EbN1)) protein is Cell division protein FtsB.